Consider the following 75-residue polypeptide: UPF0352 protein plu2871 (75 aa).

The protein belongs to the UPF0352 family.

This is UPF0352 protein plu2871 from Photorhabdus laumondii subsp. laumondii (strain DSM 15139 / CIP 105565 / TT01) (Photorhabdus luminescens subsp. laumondii).